We begin with the raw amino-acid sequence, 610 residues long: UvrABC system protein C (610 aa).

The GIY-YIG domain maps to serine 16–valine 94. The region spanning lysine 203–valine 238 is the UVR domain.

Belongs to the UvrC family. Interacts with UvrB in an incision complex.

It is found in the cytoplasm. The UvrABC repair system catalyzes the recognition and processing of DNA lesions. UvrC both incises the 5' and 3' sides of the lesion. The N-terminal half is responsible for the 3' incision and the C-terminal half is responsible for the 5' incision. The polypeptide is UvrABC system protein C (Shewanella frigidimarina (strain NCIMB 400)).